Reading from the N-terminus, the 384-residue chain is D-alanine--D-alanine ligase (384 aa).

An ATP-grasp domain is found at 167–374 (KKLFAAEGLP…YPTLLATMVD (208 aa)). An ATP-binding site is contributed by 195–250 (CERLSLPVFVKPARGGSSIGISRVSSWGQLPSAIAYARRHDPKVIVEAAVNGRELE). Aspartate 329, glutamate 341, and asparagine 343 together coordinate Mg(2+).

It belongs to the D-alanine--D-alanine ligase family. Mg(2+) serves as cofactor. The cofactor is Mn(2+).

The protein resides in the cytoplasm. It carries out the reaction 2 D-alanine + ATP = D-alanyl-D-alanine + ADP + phosphate + H(+). The protein operates within cell wall biogenesis; peptidoglycan biosynthesis. Its function is as follows. Cell wall formation. This chain is D-alanine--D-alanine ligase, found in Mycobacterium leprae (strain TN).